The primary structure comprises 363 residues: Flagellar P-ring protein (363 aa).

The N-terminal stretch at methionine 1–alanine 20 is a signal peptide.

This sequence belongs to the FlgI family. In terms of assembly, the basal body constitutes a major portion of the flagellar organelle and consists of four rings (L,P,S, and M) mounted on a central rod.

It is found in the periplasm. Its subcellular location is the bacterial flagellum basal body. Its function is as follows. Assembles around the rod to form the L-ring and probably protects the motor/basal body from shearing forces during rotation. This chain is Flagellar P-ring protein, found in Shewanella baltica (strain OS223).